A 308-amino-acid chain; its full sequence is uncharacterized protein (308 aa).

The signal sequence occupies residues 1 to 18 (MKIILLFLAALASFTVHA).

This is an uncharacterized protein from Escherichia coli (strain K12).